Consider the following 292-residue polypeptide: Cyclin-dependent kinase 5 homolog (292 aa).

Positions 4–285 (YSKIEKLGEG…AAAALKHPYF (282 aa)) constitute a Protein kinase domain. ATP contacts are provided by residues 10–18 (LGEGTYGIV) and lysine 33. At threonine 14 the chain carries Phosphothreonine. A Phosphotyrosine modification is found at tyrosine 15. The Proton acceptor role is filled by aspartate 126.

Belongs to the protein kinase superfamily. CMGC Ser/Thr protein kinase family. CDC2/CDKX subfamily.

The catalysed reaction is L-seryl-[protein] + ATP = O-phospho-L-seryl-[protein] + ADP + H(+). It carries out the reaction L-threonyl-[protein] + ATP = O-phospho-L-threonyl-[protein] + ADP + H(+). Its activity is regulated as follows. Phosphorylation at Thr-14 or Tyr-15 inactivates the enzyme. The sequence is that of Cyclin-dependent kinase 5 homolog (cdk5) from Dictyostelium discoideum (Social amoeba).